The chain runs to 325 residues: tRNA dimethylallyltransferase (325 aa).

Residue 25–32 (GNTGSGKS) coordinates ATP. 27–32 (TGSGKS) lines the substrate pocket. Positions 50-53 (DSRQ) are interaction with substrate tRNA.

Belongs to the IPP transferase family. In terms of assembly, monomer. The cofactor is Mg(2+).

It carries out the reaction adenosine(37) in tRNA + dimethylallyl diphosphate = N(6)-dimethylallyladenosine(37) in tRNA + diphosphate. Catalyzes the transfer of a dimethylallyl group onto the adenine at position 37 in tRNAs that read codons beginning with uridine, leading to the formation of N6-(dimethylallyl)adenosine (i(6)A). The sequence is that of tRNA dimethylallyltransferase from Dehalococcoides mccartyi (strain ATCC BAA-2266 / KCTC 15142 / 195) (Dehalococcoides ethenogenes (strain 195)).